Reading from the N-terminus, the 269-residue chain is Protein RKD1 (269 aa).

The 90-residue stretch at 106-195 folds into the RWP-RK domain; sequence TTTTKKRRCR…EKMEGEENED (90 aa). The stretch at 175–216 forms a coiled coil; the sequence is LQKLISNVKELEKMEGEENEDKLRNALEKLEKEKKTIEKLPD. Residues 230-269 form a disordered region; that stretch reads CFKANHKRKRRSGMSTPITSSSSSASASSSSYSSVSGFER. A compositionally biased stretch (low complexity) spans 249-269; that stretch reads SSSSSASASSSSYSSVSGFER.

It localises to the nucleus. In terms of biological role, putative transcription factor. The protein is Protein RKD1 (RKD1) of Arabidopsis thaliana (Mouse-ear cress).